Consider the following 155-residue polypeptide: MRIKLVAVGSKMPRWVEDGWQEYVKRLPSELPLELHEIPLNTRGKNADVARLIRQEGEAMLGKVQPGERIVTLEVHGKPWSTEQLAAELERWRLDARNVNLMVGGPEGLAPEVCARSEQRWSLSPLTLPHPLVRILIGEQIYRAWTLLSGHPYHK.

Residues Leu73, Gly104, and 123–128 each bind S-adenosyl-L-methionine; that span reads LSPLTL.

The protein belongs to the RNA methyltransferase RlmH family. In terms of assembly, homodimer.

It localises to the cytoplasm. The enzyme catalyses pseudouridine(1915) in 23S rRNA + S-adenosyl-L-methionine = N(3)-methylpseudouridine(1915) in 23S rRNA + S-adenosyl-L-homocysteine + H(+). Specifically methylates the pseudouridine at position 1915 (m3Psi1915) in 23S rRNA. The protein is Ribosomal RNA large subunit methyltransferase H of Stutzerimonas stutzeri (strain A1501) (Pseudomonas stutzeri).